Here is a 353-residue protein sequence, read N- to C-terminus: Abasic site processing protein HMCES (353 aa).

C2 acts as the Nucleophile in catalysis. C2 is subject to Thiazolidine linkage to a ring-opened DNA abasic site. E127 is a catalytic residue. Residues K148 and K151 each participate in a glycyl lysine isopeptide (Lys-Gly) (interchain with G-Cter in SUMO2) cross-link. At S160 the chain carries Phosphoserine. Residues K274 and K275 each participate in a glycyl lysine isopeptide (Lys-Gly) (interchain with G-Cter in SUMO2) cross-link. Residues 292–353 form a disordered region; it reads TKSPKKEVPD…DEPMAKKPNS (62 aa). Phosphoserine is present on S294. A compositionally biased stretch (basic and acidic residues) spans 295–307; that stretch reads PKKEVPDSPKKDA. K305 is covalently cross-linked (Glycyl lysine isopeptide (Lys-Gly) (interchain with G-Cter in SUMO2)). S321 carries the post-translational modification Phosphoserine. The short motif at 332-338 is the PIP-box element; it reads SFLDRWL. The segment covering 336–353 has biased composition (basic and acidic residues); sequence RWLKQEKEDEPMAKKPNS. Residues K339 and K342 each participate in a glycyl lysine isopeptide (Lys-Gly) (interchain with G-Cter in SUMO2) cross-link.

It belongs to the SOS response-associated peptidase family. As to quaternary structure, interacts (via PIP-box motif) with PCNA. As to expression, expressed in embryonic stem cells.

It localises to the chromosome. With respect to regulation, formation and reversal of DNA-protein cross-link depends on DNA context. Catalyzes formation of the thiazolidine linkage in presence of abasic sites in single-stranded DNA. Mediates the reversal of the thiazolidine cross-link in presence of double stranded DNA. Functionally, sensor of abasic sites in single-stranded DNA (ssDNA) required to preserve genome integrity by promoting error-free repair of abasic sites. Acts as an enzyme that recognizes and binds abasic sites in ssDNA at replication forks and chemically modifies the lesion by forming a covalent cross-link with DNA: forms a stable thiazolidine linkage between a ring-opened abasic site and the alpha-amino and sulfhydryl substituents of its N-terminal catalytic cysteine residue. Promotes error-free repair by protecting abasic sites from translesion synthesis (TLS) polymerases and endonucleases that are error-prone and would generate mutations and double-strand breaks. The HMCES DNA-protein cross-link is then either reversed or degraded. HMCES is able to catalyze the reversal of its thiazolidine cross-link and cycle between a cross-link and a non-cross-linked state depending on DNA context: mediates self-reversal of the thiazolidine cross-link in double stranded DNA, allowing APEX1 to initiate downstream repair of abasic sites. The HMCES DNA-protein cross-link can also be degraded by the SPRTN metalloprotease following unfolding by the BRIP1/FANCJ helicase. Has preference for ssDNA, but can also accommodate double-stranded DNA with 3' or 5' overhang (dsDNA), and dsDNA-ssDNA 3' junction. Plays a protective role during somatic hypermutation of immunoglobulin genes in B-cells: acts via its ability to form covalent cross-links with abasic sites, thereby limiting the accumulation of deletions in somatic hypermutation target regions. Also involved in class switch recombination (CSR) in B-cells independently of the formation of a DNA-protein cross-link: acts by binding and protecting ssDNA overhangs to promote DNA double-strand break repair through the microhomology-mediated alternative-end-joining (Alt-EJ) pathway. Acts as a protease: mediates autocatalytic processing of its N-terminal methionine in order to expose the catalytic cysteine. In Mus musculus (Mouse), this protein is Abasic site processing protein HMCES.